The primary structure comprises 274 residues: Cytochrome b-c1 complex subunit Rieske, mitochondrial (274 aa).

At 79 to 103 (SHTDVRVPDFSEYRRLEVLDSTKSS) the chain is on the mitochondrial matrix side. Residues 104 to 140 (RESSEARKGFSYLVTGVTTVGVAYAAKNVVTQFVSSM) form a helical membrane-spanning segment. The Mitochondrial intermembrane segment spans residues 141-274 (SASADVLALA…FTSDDMVIVG (134 aa)). The Rieske domain maps to 187–272 (EAAVELSQLR…YEFTSDDMVI (86 aa)). [2Fe-2S] cluster contacts are provided by C217, H219, C236, H239, and S241. C222 and C238 are disulfide-bonded.

The protein belongs to the Rieske iron-sulfur protein family. As to quaternary structure, component of the ubiquinol-cytochrome c oxidoreductase (cytochrome b-c1 complex, complex III, CIII), a multisubunit enzyme composed of 11 subunits. The complex is composed of 3 respiratory subunits cytochrome b, cytochrome c1 and Rieske protein UQCRFS1, 2 core protein subunits UQCRC1/QCR1 and UQCRC2/QCR2, and 6 low-molecular weight protein subunits UQCRH/QCR6, UQCRB/QCR7, UQCRQ/QCR8, UQCR10/QCR9, UQCR11/QCR10 and subunit 9, the cleavage product of Rieske protein UQCRFS1. The complex exists as an obligatory dimer and forms supercomplexes (SCs) in the inner mitochondrial membrane with NADH-ubiquinone oxidoreductase (complex I, CI) and cytochrome c oxidase (complex IV, CIV), resulting in different assemblies (supercomplex SCI(1)III(2)IV(1) and megacomplex MCI(2)III(2)IV(2)). Incorporation of the Rieske protein UQCRFS1 is the penultimate step in complex III assembly. Interacts with TTC19, which is involved in the clearance of UQCRFS1 fragments. In terms of assembly, component of the ubiquinol-cytochrome c oxidoreductase (cytochrome b-c1 complex, complex III, CIII). Subunit 9 corresponds to the mitochondrial targeting sequence (MTS) of Rieske protein UQCRFS1. It is retained after processing and incorporated inside complex III, where it remains bound to the complex and localizes between the 2 core subunits UQCRC1/QCR1 and UQCRC2/QCR2. [2Fe-2S] cluster is required as a cofactor. In terms of processing, proteolytic processing is necessary for the correct insertion of UQCRFS1 in the complex III dimer. Several fragments are generated during UQCRFS1 insertion, most probably due to the endogenous matrix-processing peptidase (MPP) activity of the 2 core protein subunits UQCRC1/QCR1 and UQCRC2/QCR2, which are homologous to the 2 mitochondrial-processing peptidase (MPP) subunits beta-MPP and alpha-MPP respectively. The action of the protease is also necessary for the clearance of the UQCRFS1 fragments.

The protein resides in the mitochondrion inner membrane. The catalysed reaction is a quinol + 2 Fe(III)-[cytochrome c](out) = a quinone + 2 Fe(II)-[cytochrome c](out) + 2 H(+)(out). Component of the ubiquinol-cytochrome c oxidoreductase, a multisubunit transmembrane complex that is part of the mitochondrial electron transport chain which drives oxidative phosphorylation. The respiratory chain contains 3 multisubunit complexes succinate dehydrogenase (complex II, CII), ubiquinol-cytochrome c oxidoreductase (cytochrome b-c1 complex, complex III, CIII) and cytochrome c oxidase (complex IV, CIV), that cooperate to transfer electrons derived from NADH and succinate to molecular oxygen, creating an electrochemical gradient over the inner membrane that drives transmembrane transport and the ATP synthase. The cytochrome b-c1 complex catalyzes electron transfer from ubiquinol to cytochrome c, linking this redox reaction to translocation of protons across the mitochondrial inner membrane, with protons being carried across the membrane as hydrogens on the quinol. In the process called Q cycle, 2 protons are consumed from the matrix, 4 protons are released into the intermembrane space and 2 electrons are passed to cytochrome c. The Rieske protein is a catalytic core subunit containing a [2Fe-2S] iron-sulfur cluster. It cycles between 2 conformational states during catalysis to transfer electrons from the quinol bound in the Q(0) site in cytochrome b to cytochrome c1. Incorporation of UQCRFS1 is the penultimate step in complex III assembly. In terms of biological role, component of the ubiquinol-cytochrome c oxidoreductase (cytochrome b-c1 complex, complex III, CIII). UQCRFS1 undergoes proteolytic processing once it is incorporated in the complex III dimer. One of the fragments, called subunit 9, corresponds to its mitochondrial targeting sequence (MTS). The proteolytic processing is necessary for the correct insertion of UQCRFS1 in the complex III dimer, but the persistence of UQCRFS1-derived fragments may prevent newly imported UQCRFS1 to be processed and assembled into complex III and is detrimental for the complex III structure and function. This chain is Cytochrome b-c1 complex subunit Rieske, mitochondrial (UQCRFS1), found in Pongo pygmaeus (Bornean orangutan).